Reading from the N-terminus, the 147-residue chain is UPF0178 protein VIBHAR_03247 (147 aa).

This sequence belongs to the UPF0178 family.

This Vibrio campbellii (strain ATCC BAA-1116) protein is UPF0178 protein VIBHAR_03247.